The sequence spans 146 residues: 3-hydroxyacyl-[acyl-carrier-protein] dehydratase FabZ (146 aa).

H49 is a catalytic residue.

Belongs to the thioester dehydratase family. FabZ subfamily.

The protein resides in the cytoplasm. It carries out the reaction a (3R)-hydroxyacyl-[ACP] = a (2E)-enoyl-[ACP] + H2O. Its function is as follows. Involved in unsaturated fatty acids biosynthesis. Catalyzes the dehydration of short chain beta-hydroxyacyl-ACPs and long chain saturated and unsaturated beta-hydroxyacyl-ACPs. This is 3-hydroxyacyl-[acyl-carrier-protein] dehydratase FabZ from Pseudomonas fluorescens (strain ATCC BAA-477 / NRRL B-23932 / Pf-5).